A 602-amino-acid chain; its full sequence is uncharacterized protein (602 aa).

This sequence belongs to the IIV-6 098R family.

This is an uncharacterized protein from Acheta domesticus (House cricket).